The chain runs to 2408 residues: Protein ELYS (2408 aa).

The seven-bladed beta propeller repeats stretch occupies residues 1 to 492 (MQNLEAQVTG…SGLIHFACTG (492 aa)). A disordered region spans residues 1016–2408 (YSLPSLVWRE…AKPVTRRKMR (1393 aa)). Residues 1124 to 1145 (PLTSSDTDNNQTPHKSPLLKTS) show a composition bias toward polar residues. Residues 1457–1466 (NDQDSEEIEE) show a composition bias toward acidic residues. Composition is skewed to polar residues over residues 1705–1719 (INEGQVSPNRDQSTL) and 1735–1750 (PADSSTDIIGNITLPT). Positions 2136–2149 (QASKIQEDLSDTPR) are enriched in basic and acidic residues. Sufficient for chromatin-binding stretches follow at residues 2281–2359 (STQY…PVEI) and 2359–2408 (IKLI…RKMR). The tract at residues 2281–2408 (STQYVFSPPS…AKPVTRRKMR (128 aa)) is sufficient to block nuclear pore assembly. The segment at residues 2329-2341 (SKPRGRPPKHKAK) is a DNA-binding region (a.T hook). A compositionally biased stretch (basic residues) spans 2331-2348 (PRGRPPKHKAKAVTRVLK). Over residues 2378-2389 (DSTEAKGAEKIS) the composition is skewed to basic and acidic residues.

Belongs to the ELYS family. As to quaternary structure, interacts with the Nup107-160 subcomplex of the NPC.

It is found in the nucleus. The protein localises to the nuclear pore complex. Its subcellular location is the cytoplasm. It localises to the nucleoplasm. Required for the assembly of a functional nuclear pore complex (NPC) on the surface of chromosomes as nuclei form at the end of mitosis. May initiate NPC assembly by binding to chromatin and recruiting the Nup107-160 subcomplex, which may in turn recruit membrane vesicles containing pom121 and tmem48/ndc1. Association with chromatin may require the presence of the mcm2-mcm7 complex, suggesting a mechanism for coordination of nuclear assembly and the inactivation of replication licensing. The polypeptide is Protein ELYS (ahctf1) (Xenopus laevis (African clawed frog)).